The primary structure comprises 289 residues: uncharacterized protein (289 aa).

Residues 1–19 (MAKWLGAPLARGVSTATRA) form the signal peptide. The next 2 helical transmembrane spans lie at 90–110 (GLLA…GWGV) and 257–277 (AALS…LVFA).

The protein localises to the cell membrane. This is an uncharacterized protein from Mycobacterium tuberculosis (strain ATCC 25618 / H37Rv).